The sequence spans 215 residues: ATP-dependent Clp protease proteolytic subunit (215 aa).

Residue Ser-111 is the Nucleophile of the active site. The active site involves His-136.

Belongs to the peptidase S14 family. Fourteen ClpP subunits assemble into 2 heptameric rings which stack back to back to give a disk-like structure with a central cavity, resembling the structure of eukaryotic proteasomes.

Its subcellular location is the cytoplasm. It carries out the reaction Hydrolysis of proteins to small peptides in the presence of ATP and magnesium. alpha-casein is the usual test substrate. In the absence of ATP, only oligopeptides shorter than five residues are hydrolyzed (such as succinyl-Leu-Tyr-|-NHMec, and Leu-Tyr-Leu-|-Tyr-Trp, in which cleavage of the -Tyr-|-Leu- and -Tyr-|-Trp bonds also occurs).. Its function is as follows. Cleaves peptides in various proteins in a process that requires ATP hydrolysis. Has a chymotrypsin-like activity. Plays a major role in the degradation of misfolded proteins. The chain is ATP-dependent Clp protease proteolytic subunit from Hamiltonella defensa subsp. Acyrthosiphon pisum (strain 5AT).